The sequence spans 431 residues: Phosphoribosylamine--glycine ligase (431 aa).

Residues 108–315 (KDFLARHEIP…LVLLVEAAFA (208 aa)) enclose the ATP-grasp domain. 134-195 (LQEKGAPIVI…EEFLDGEEAS (62 aa)) contributes to the ATP binding site. Mg(2+) is bound by residues Glu285 and Asn287.

The protein belongs to the GARS family. The cofactor is Mg(2+). Mn(2+) serves as cofactor.

It carries out the reaction 5-phospho-beta-D-ribosylamine + glycine + ATP = N(1)-(5-phospho-beta-D-ribosyl)glycinamide + ADP + phosphate + H(+). Its pathway is purine metabolism; IMP biosynthesis via de novo pathway; N(1)-(5-phospho-D-ribosyl)glycinamide from 5-phospho-alpha-D-ribose 1-diphosphate: step 2/2. The sequence is that of Phosphoribosylamine--glycine ligase from Pseudomonas putida (strain ATCC 47054 / DSM 6125 / CFBP 8728 / NCIMB 11950 / KT2440).